The following is a 206-amino-acid chain: Small ribosomal subunit protein uS5 (206 aa).

A compositionally biased stretch (polar residues) spans 1–15 (MTDTPTKQEIQSKND). Residues 1-50 (MTDTPTKQEIQSKNDNVPAATPVEQKKNNRNDRKRNRRGDSKNLERDSDW) are disordered. Residues 38–50 (RGDSKNLERDSDW) show a composition bias toward basic and acidic residues. The 64-residue stretch at 50–113 (WQERVVQIRR…SDGKKNLVRV (64 aa)) folds into the S5 DRBM domain.

It belongs to the universal ribosomal protein uS5 family. In terms of assembly, part of the 30S ribosomal subunit. Contacts proteins S4 and S8.

In terms of biological role, with S4 and S12 plays an important role in translational accuracy. Located at the back of the 30S subunit body where it stabilizes the conformation of the head with respect to the body. The chain is Small ribosomal subunit protein uS5 from Prochlorococcus marinus (strain AS9601).